We begin with the raw amino-acid sequence, 157 residues long: 2-C-methyl-D-erythritol 2,4-cyclodiphosphate synthase (157 aa).

2 residues coordinate a divalent metal cation: Asp-8 and His-10. 4-CDP-2-C-methyl-D-erythritol 2-phosphate-binding positions include 8-10 (DVH) and 34-35 (HS). His-42 lines the a divalent metal cation pocket. 4-CDP-2-C-methyl-D-erythritol 2-phosphate-binding positions include 56-58 (DIG), 61-65 (FPDTD), 132-135 (TTTE), Phe-139, and Arg-142.

This sequence belongs to the IspF family. In terms of assembly, homotrimer. Requires a divalent metal cation as cofactor.

It carries out the reaction 4-CDP-2-C-methyl-D-erythritol 2-phosphate = 2-C-methyl-D-erythritol 2,4-cyclic diphosphate + CMP. It functions in the pathway isoprenoid biosynthesis; isopentenyl diphosphate biosynthesis via DXP pathway; isopentenyl diphosphate from 1-deoxy-D-xylulose 5-phosphate: step 4/6. Its function is as follows. Involved in the biosynthesis of isopentenyl diphosphate (IPP) and dimethylallyl diphosphate (DMAPP), two major building blocks of isoprenoid compounds. Catalyzes the conversion of 4-diphosphocytidyl-2-C-methyl-D-erythritol 2-phosphate (CDP-ME2P) to 2-C-methyl-D-erythritol 2,4-cyclodiphosphate (ME-CPP) with a corresponding release of cytidine 5-monophosphate (CMP). The polypeptide is 2-C-methyl-D-erythritol 2,4-cyclodiphosphate synthase (Geotalea uraniireducens (strain Rf4) (Geobacter uraniireducens)).